Consider the following 431-residue polypeptide: Adenylosuccinate synthetase (431 aa).

GTP is bound by residues 12–18 (GDEGKGK) and 40–42 (GHT). Asp13 (proton acceptor) is an active-site residue. Positions 13 and 40 each coordinate Mg(2+). Residues 13–16 (DEGK), 38–41 (NAGH), Thr128, Arg142, Gln223, Thr238, and Arg301 each bind IMP. Catalysis depends on His41, which acts as the Proton donor. 297–303 (TVTGRPR) is a binding site for substrate. GTP contacts are provided by residues Arg303, 329-331 (SID), and 411-413 (SVG).

This sequence belongs to the adenylosuccinate synthetase family. Homodimer. Mg(2+) serves as cofactor.

The protein localises to the cytoplasm. It carries out the reaction IMP + L-aspartate + GTP = N(6)-(1,2-dicarboxyethyl)-AMP + GDP + phosphate + 2 H(+). It functions in the pathway purine metabolism; AMP biosynthesis via de novo pathway; AMP from IMP: step 1/2. Its function is as follows. Plays an important role in the de novo pathway of purine nucleotide biosynthesis. Catalyzes the first committed step in the biosynthesis of AMP from IMP. This chain is Adenylosuccinate synthetase, found in Lacticaseibacillus paracasei (strain ATCC 334 / BCRC 17002 / CCUG 31169 / CIP 107868 / KCTC 3260 / NRRL B-441) (Lactobacillus paracasei).